Reading from the N-terminus, the 364-residue chain is Adenosine 3'-phospho 5'-phosphosulfate transporter 2 (364 aa).

10 helical membrane passes run 39-59 (WLQF…YGYM), 74-94 (WTLT…ECII), 106-126 (IYGV…ASVG), 131-151 (PTQV…GILI), 157-177 (GWID…FTLA), 187-206 (SRGY…IGNI), 231-251 (VFIF…PFFL), 257-277 (TFGY…VVLT), 281-301 (VFGA…TIIL), and 310-330 (FTIE…LNLY).

The protein belongs to the nucleotide-sugar transporter family. SLC35B subfamily.

The protein resides in the golgi apparatus membrane. Functionally, mediates the transport of adenosine 3'-phospho 5'-phosphosulfate (PAPS), from cytosol into Golgi. PAPS is a universal sulfuryl donor for sulfation events that take place in the Golgi. The sequence is that of Adenosine 3'-phospho 5'-phosphosulfate transporter 2 (pst-2) from Caenorhabditis elegans.